Consider the following 94-residue polypeptide: Co-chaperonin GroES (94 aa).

It belongs to the GroES chaperonin family. As to quaternary structure, heptamer of 7 subunits arranged in a ring. Interacts with the chaperonin GroEL.

Its subcellular location is the cytoplasm. Its function is as follows. Together with the chaperonin GroEL, plays an essential role in assisting protein folding. The GroEL-GroES system forms a nano-cage that allows encapsulation of the non-native substrate proteins and provides a physical environment optimized to promote and accelerate protein folding. GroES binds to the apical surface of the GroEL ring, thereby capping the opening of the GroEL channel. This is Co-chaperonin GroES from Alkaliphilus metalliredigens (strain QYMF).